The chain runs to 341 residues: tRNA N6-adenosine threonylcarbamoyltransferase (341 aa).

His-111 and His-115 together coordinate Fe cation. Substrate-binding positions include 134 to 138 (LVSGG), Asp-167, Gly-180, and Asn-276. Position 304 (Asp-304) interacts with Fe cation.

It belongs to the KAE1 / TsaD family. Requires Fe(2+) as cofactor.

It is found in the cytoplasm. The enzyme catalyses L-threonylcarbamoyladenylate + adenosine(37) in tRNA = N(6)-L-threonylcarbamoyladenosine(37) in tRNA + AMP + H(+). Required for the formation of a threonylcarbamoyl group on adenosine at position 37 (t(6)A37) in tRNAs that read codons beginning with adenine. Is involved in the transfer of the threonylcarbamoyl moiety of threonylcarbamoyl-AMP (TC-AMP) to the N6 group of A37, together with TsaE and TsaB. TsaD likely plays a direct catalytic role in this reaction. The protein is tRNA N6-adenosine threonylcarbamoyltransferase of Pseudomonas syringae pv. tomato (strain ATCC BAA-871 / DC3000).